A 184-amino-acid chain; its full sequence is Adenine phosphoribosyltransferase (184 aa).

It belongs to the purine/pyrimidine phosphoribosyltransferase family. In terms of assembly, homodimer.

It localises to the cytoplasm. It carries out the reaction AMP + diphosphate = 5-phospho-alpha-D-ribose 1-diphosphate + adenine. The protein operates within purine metabolism; AMP biosynthesis via salvage pathway; AMP from adenine: step 1/1. In terms of biological role, catalyzes a salvage reaction resulting in the formation of AMP, that is energically less costly than de novo synthesis. The sequence is that of Adenine phosphoribosyltransferase from Paracidovorax citrulli (strain AAC00-1) (Acidovorax citrulli).